The following is a 39-amino-acid chain: Potassium channel toxin alpha-KTx 2.9 (39 aa).

Cystine bridges form between C7–C29, C13–C34, and C17–C36. N39 is modified (asparagine amide).

It belongs to the short scorpion toxin superfamily. Potassium channel inhibitor family. Alpha-KTx 02 subfamily. In terms of tissue distribution, expressed by the venom gland.

The protein localises to the secreted. Functionally, blocks Kv1.3/KCNA3 voltage-gated potassium channels of human T-lymphocytes (Kd=0.25 nM). This is Potassium channel toxin alpha-KTx 2.9 from Centruroides elegans (Bark scorpion).